The primary structure comprises 382 residues: Gap junction alpha-1 protein (382 aa).

Residues 2 to 23 (GDWSALGKLLDKVQAYSTAGGK) are Cytoplasmic-facing. Position 5 is a phosphoserine (Ser5). The chain crosses the membrane as a helical span at residues 24-44 (VWLSVLFIFRILLLGTAVESA). At 45-76 (WGDEQSAFRCNTQQPGCENVCYDKSFPISHVR) the chain is on the extracellular side. Cystine bridges form between Cys54–Cys192 and Cys187–Cys198. A helical membrane pass occupies residues 77–97 (FWVLQIIFVSVPTLLYLAHVF). Over 98 to 155 (YVMRKEEKLNKKEEELKVAQTDGVNVEMHLKQIEIKKFKYGIEEHGKVKMRGGLLRTY) the chain is Cytoplasmic. Residue Lys144 forms a Glycyl lysine isopeptide (Lys-Gly) (interchain with G-Cter in SUMO) linkage. The chain crosses the membrane as a helical span at residues 156–176 (IISILFKSVFEVAFLLIQWYI). The Extracellular portion of the chain corresponds to 177-207 (YGFSLSAVYTCKRDPCPHQVDCFLSRPTEKT). A helical membrane pass occupies residues 208 to 228 (IFIIFMLVVSLVSLALNIIEL). Residues 229–382 (FYVFFKGVKD…SRPRPDDLEI (154 aa)) lie on the Cytoplasmic side of the membrane. Residue Lys237 forms a Glycyl lysine isopeptide (Lys-Gly) (interchain with G-Cter in SUMO) linkage. Residues 244 to 382 (SDPYHATTGP…SRPRPDDLEI (139 aa)) form an interaction with NOV region. Tyr247 bears the Phosphotyrosine mark. Residues Ser255, Ser257, and Ser262 each carry the phosphoserine modification. The segment at 264 to 382 (KYAYFNGCSS…SRPRPDDLEI (119 aa)) is interaction with UBQLN4. At Cys271 the chain carries S-nitrosocysteine. Phosphothreonine is present on Thr275. A phosphoserine mark is found at Ser306, Ser314, and Ser325. Residues 317 to 332 (QNRMGQAGSTISNSHA) show a composition bias toward polar residues. The tract at residues 317–382 (QNRMGQAGST…SRPRPDDLEI (66 aa)) is disordered. Position 326 is a phosphothreonine (Thr326). 3 positions are modified to phosphoserine: Ser328, Ser330, and Ser365. Positions 362–374 (RPSSRASSRASSR) are enriched in low complexity. Phosphoserine; by PKC/PRKCG and PKC/PRKCD is present on Ser368. Residues Ser369 and Ser373 each carry the phosphoserine modification.

This sequence belongs to the connexin family. Alpha-type (group II) subfamily. In terms of assembly, a connexon is composed of a hexamer of connexins. Interacts with SGSM3. Interacts with RIC1/CIP150. Interacts with CNST and CSNK1D. Interacts (via C-terminus) with TJP1. Interacts (via C-terminus) with SRC (via SH3 domain). Interacts (not ubiquitinated) with UBQLN4 (via UBA domain). Interacts with NOV. Interacts with TMEM65. Interacts with ANK3/ANKG and PKP2. In terms of processing, contains at least one intramolecular disulfide bond. Post-translationally, phosphorylation at Ser-325, Ser-328 and Ser-330 by CK1 modulates gap junction assembly. Phosphorylated at Ser-368 by PRKCG; phosphorylation induces disassembly of gap junction plaques and inhibition of gap junction activity. Phosphorylation at Ser-368 by PRKCD triggers its internalization into small vesicles leading to proteasome-mediated degradation. Sumoylated with SUMO1, SUMO2 and SUMO3, which may regulate the level of functional Cx43 gap junctions at the plasma membrane. May be desumoylated by SENP1 or SENP2. In terms of processing, S-nitrosylation at Cys-271 is enriched at the muscle endothelial gap junction in arteries, it augments channel permeability and may regulate of smooth muscle cell to endothelial cell communication. Post-translationally, acetylated in the developing cortex; leading to delocalization from the cell membrane. As to expression, detected in ventricle and atrium (at protein level).

It localises to the cell membrane. The protein resides in the cell junction. The protein localises to the gap junction. It is found in the endoplasmic reticulum. In terms of biological role, gap junction protein that acts as a regulator of bladder capacity. A gap junction consists of a cluster of closely packed pairs of transmembrane channels, the connexons, through which materials of low MW diffuse from one cell to a neighboring cell. Negative regulator of bladder functional capacity: acts by enhancing intercellular electrical and chemical transmission, thus sensitizing bladder muscles to cholinergic neural stimuli and causing them to contract. May play a role in cell growth inhibition through the regulation of NOV expression and localization. Plays an essential role in gap junction communication in the ventricles. In Rattus norvegicus (Rat), this protein is Gap junction alpha-1 protein (Gja1).